A 544-amino-acid chain; its full sequence is Glutamyl-tRNA(Gln) amidotransferase subunit B, chloroplastic/mitochondrial (544 aa).

It belongs to the GatB/GatE family. GatB subfamily. Subunit of the heterotrimeric GatCAB amidotransferase (AdT) complex, composed of A, B and C subunits.

Its subcellular location is the mitochondrion. It localises to the plastid. The protein localises to the chloroplast. The catalysed reaction is L-glutamyl-tRNA(Gln) + L-glutamine + ATP + H2O = L-glutaminyl-tRNA(Gln) + L-glutamate + ADP + phosphate + H(+). Its function is as follows. Allows the formation of correctly charged Gln-tRNA(Gln) through the transamidation of misacylated Glu-tRNA(Gln) in chloroplasts and mitochondria. The reaction takes place in the presence of glutamine and ATP through an activated gamma-phospho-Glu-tRNA(Gln). The polypeptide is Glutamyl-tRNA(Gln) amidotransferase subunit B, chloroplastic/mitochondrial (Oryza sativa subsp. japonica (Rice)).